The primary structure comprises 116 residues: NADH-ubiquinone oxidoreductase chain 3 (116 aa).

The next 3 helical transmembrane spans lie at 3–23 (LITT…TVSF), 56–76 (FFLI…LLPL), and 85–105 (PALT…GLIY).

Belongs to the complex I subunit 3 family.

It localises to the mitochondrion membrane. It catalyses the reaction a ubiquinone + NADH + 5 H(+)(in) = a ubiquinol + NAD(+) + 4 H(+)(out). Core subunit of the mitochondrial membrane respiratory chain NADH dehydrogenase (Complex I) that is believed to belong to the minimal assembly required for catalysis. Complex I functions in the transfer of electrons from NADH to the respiratory chain. The immediate electron acceptor for the enzyme is believed to be ubiquinone. In Salmo trutta (Brown trout), this protein is NADH-ubiquinone oxidoreductase chain 3 (MT-ND3).